The primary structure comprises 285 residues: Bifunctional protein FolD (285 aa).

Residues 166 to 168 (GRS), serine 191, and threonine 232 each bind NADP(+).

Belongs to the tetrahydrofolate dehydrogenase/cyclohydrolase family. Homodimer.

The catalysed reaction is (6R)-5,10-methylene-5,6,7,8-tetrahydrofolate + NADP(+) = (6R)-5,10-methenyltetrahydrofolate + NADPH. It carries out the reaction (6R)-5,10-methenyltetrahydrofolate + H2O = (6R)-10-formyltetrahydrofolate + H(+). It functions in the pathway one-carbon metabolism; tetrahydrofolate interconversion. Catalyzes the oxidation of 5,10-methylenetetrahydrofolate to 5,10-methenyltetrahydrofolate and then the hydrolysis of 5,10-methenyltetrahydrofolate to 10-formyltetrahydrofolate. The sequence is that of Bifunctional protein FolD from Chloroflexus aurantiacus (strain ATCC 29366 / DSM 635 / J-10-fl).